A 79-amino-acid chain; its full sequence is Small ribosomal subunit protein bS18 (79 aa).

This sequence belongs to the bacterial ribosomal protein bS18 family. In terms of assembly, part of the 30S ribosomal subunit. Forms a tight heterodimer with protein bS6.

Functionally, binds as a heterodimer with protein bS6 to the central domain of the 16S rRNA, where it helps stabilize the platform of the 30S subunit. The sequence is that of Small ribosomal subunit protein bS18 from Pseudarthrobacter chlorophenolicus (strain ATCC 700700 / DSM 12829 / CIP 107037 / JCM 12360 / KCTC 9906 / NCIMB 13794 / A6) (Arthrobacter chlorophenolicus).